A 361-amino-acid polypeptide reads, in one-letter code: Cytosolic Fe-S cluster assembly factor CFD1 (361 aa).

Residue 37 to 44 (GKGGVGKS) coordinates ATP. [4Fe-4S] cluster is bound by residues C218 and C221. The disordered stretch occupies residues 293–314 (HSQSAAAQLPNSGDTESLTPAG).

The protein belongs to the Mrp/NBP35 ATP-binding proteins family. NUBP2/CFD1 subfamily. Heterotetramer of 2 NBP35 and 2 CFD1 chains. The cofactor is [4Fe-4S] cluster.

The protein localises to the cytoplasm. In terms of biological role, component of the cytosolic iron-sulfur (Fe/S) protein assembly (CIA) machinery. Required for maturation of extramitochondrial Fe-S proteins. The NBP35-CFD1 heterotetramer forms a Fe-S scaffold complex, mediating the de novo assembly of an Fe-S cluster and its transfer to target apoproteins. In Mycosarcoma maydis (Corn smut fungus), this protein is Cytosolic Fe-S cluster assembly factor CFD1.